Here is a 342-residue protein sequence, read N- to C-terminus: Uroporphyrinogen decarboxylase (342 aa).

Substrate is bound by residues 22–26 (RQAGR), Phe-42, Asp-72, Tyr-146, Ser-201, and His-317.

It belongs to the uroporphyrinogen decarboxylase family. Homodimer.

It is found in the cytoplasm. It carries out the reaction uroporphyrinogen III + 4 H(+) = coproporphyrinogen III + 4 CO2. Its pathway is porphyrin-containing compound metabolism; protoporphyrin-IX biosynthesis; coproporphyrinogen-III from 5-aminolevulinate: step 4/4. Functionally, catalyzes the decarboxylation of four acetate groups of uroporphyrinogen-III to yield coproporphyrinogen-III. The protein is Uroporphyrinogen decarboxylase of Orientia tsutsugamushi (strain Ikeda) (Rickettsia tsutsugamushi).